A 152-amino-acid polypeptide reads, in one-letter code: SsrA-binding protein (152 aa).

Basic and acidic residues predominate over residues 129–140; that stretch reads KREDMKKKDSQR. Residues 129-152 are disordered; it reads KREDMKKKDSQRELSQALKSKNRE. Positions 141–152 are enriched in polar residues; it reads ELSQALKSKNRE.

It belongs to the SmpB family.

The protein localises to the cytoplasm. In terms of biological role, required for rescue of stalled ribosomes mediated by trans-translation. Binds to transfer-messenger RNA (tmRNA), required for stable association of tmRNA with ribosomes. tmRNA and SmpB together mimic tRNA shape, replacing the anticodon stem-loop with SmpB. tmRNA is encoded by the ssrA gene; the 2 termini fold to resemble tRNA(Ala) and it encodes a 'tag peptide', a short internal open reading frame. During trans-translation Ala-aminoacylated tmRNA acts like a tRNA, entering the A-site of stalled ribosomes, displacing the stalled mRNA. The ribosome then switches to translate the ORF on the tmRNA; the nascent peptide is terminated with the 'tag peptide' encoded by the tmRNA and targeted for degradation. The ribosome is freed to recommence translation, which seems to be the essential function of trans-translation. In Pelobacter propionicus (strain DSM 2379 / NBRC 103807 / OttBd1), this protein is SsrA-binding protein.